Here is a 616-residue protein sequence, read N- to C-terminus: Heme A synthase-mitochondrial ferredoxin fusion protein (616 aa).

The N-terminal 45 residues, 1-45 (MNISRSSGLMRQFLLQPLRKGCDISCLGRSSWRMSRSFSGSSVLN), are a transit peptide targeting the mitochondrion. Residues 45–465 (NEINLSRTKN…AALSLAQRLH (421 aa)) are heme a synthase cox15-like. The Mitochondrial matrix segment spans residues 46–97 (EINLSRTKNLFLNDCKFNKNSFEKFFARRLSNSVAPTPGGILQETEKIPSKK). Residues 98-118 (VAFWLLGSSALVLAIVVVGGI) form a helical membrane-spanning segment. At 119–182 (TRLTESGLSI…NIFFWEWFHR (64 aa)) the chain is on the mitochondrial intermembrane side. H181 provides a ligand contact to heme o. The chain crosses the membrane as a helical span at residues 183 to 203 (VLGRGIGLTILLPSIYMIVTK). Residues 204-212 (RASPWLSKR) are Mitochondrial matrix-facing. The helical transmembrane segment at 213–233 (LIGLTGLVGLQGVIGWWMVKS) threads the bilayer. Topologically, residues 234–254 (GLSEELFSDGSHPRVSHYRLA) are mitochondrial intermembrane. Residues 255–275 (THLAAAVALYIGLVWTGHGIL) traverse the membrane as a helical segment. Heme o is bound at residue H256. The Mitochondrial matrix portion of the chain corresponds to 276-311 (QRHAFLKSMKSGSTSQLTSMVSSVQKMKGFRTSVNS). Residues 312 to 332 (FVGLVLITLLSGAFVAGLDAG) form a helical membrane-spanning segment. The Mitochondrial intermembrane segment spans residues 333 to 380 (MIYCTFPEMGEGRLAPSKSELFDQRFCRKDDKSDLIWRNMIDNPSLVQ). The chain crosses the membrane as a helical span at residues 381 to 401 (LEHRILAITTFVAACGLFIFS). H383 contacts heme b. At 402–417 (RAKRNILPKKIKTSIN) the chain is on the mitochondrial matrix side. Residues 418-438 (VVTGVVTAQATLGIMTLIYVV) traverse the membrane as a helical segment. Residue P439 is a topological domain, mitochondrial intermembrane. The helical transmembrane segment at 440–460 (VPLAALHQAGSLVTLTAALSL) threads the bilayer. H446 is a heme b binding site. Topologically, residues 461-616 (AQRLHPEYAL…RNIRLERPKA (156 aa)) are mitochondrial matrix. Residues 502-606 (FRPSFHSEIK…GIRVRIPAQT (105 aa)) form the 2Fe-2S ferredoxin-type domain. The mitochondrial ferredoxin yah1-like stretch occupies residues 516–616 (GTGIKVFFVT…RNIRLERPKA (101 aa)). [2Fe-2S] cluster is bound by residues C541, C547, C550, and C587.

The protein in the N-terminal section; belongs to the COX15/CtaA family. Type 2 subfamily. This sequence in the C-terminal section; belongs to the adrenodoxin/putidaredoxin family. Homodimer. It depends on heme b as a cofactor. Requires [2Fe-2S] cluster as cofactor. Post-translationally, the etp1 preprotein is cleaved into 2 chains after imort into mitochondria. The N-terminal chain containing a heme A synthase cox15-like domain etp1(cd) is a subunit of the membrane-embedded cytochrome c oxidase complex and functions in the respiratory chain. The C-terminal chain containing a ferredoxin yah1-like domain etp1(fd) is released and serves in the matrix as electron transfer protein.

The protein resides in the mitochondrion inner membrane. It is found in the mitochondrion matrix. The enzyme catalyses Fe(II)-heme o + 2 A + H2O = Fe(II)-heme a + 2 AH2. It participates in porphyrin-containing compound metabolism; heme A biosynthesis; heme A from heme O: step 1/1. In terms of biological role, catalyzes the second reaction in the biosynthesis of heme A, a prosthetic group of mitochondrial cytochrome c oxidase (CcO). Heme A is synthesized from heme B by two sequential enzymatic reactions catalyzed by heme O synthase (HOS) and heme A synthase (HAS). HAS catalyzes the conversion of heme O to heme A by two successive hydroxylations of the methyl group at C8, in a reaction that involves matrix ferredoxin and ferredoxin reductase. The first hydroxylation forms heme I, the second hydroxylation results in an unstable dihydroxymethyl group, which spontaneously dehydrates, resulting in the formyl group of heme A. Its function is as follows. Iron-sulfur protein that transfers electrons in a wide variety of metabolic reactions. Involved in heme A biosynthesis and in iron-sulfur cluster assembly. Transfers electrons from adrenodoxin reductase arh1 to heme A synthase etp1(cd), a heme protein that catalyzes the conversion of heme O to heme A. Required for the de novo synthesis of Fe-S clusters on iron sulfur cluster assembly protein isu1. Interact in its reduced state with isu1 to productively deliver electrons for Fe-S cluster synthesis. Essential for coenzyme Q biosynthesis. May transfer the electrons required for the hydroxylation reaction performed by coq6. The sequence is that of Heme A synthase-mitochondrial ferredoxin fusion protein from Schizosaccharomyces pombe (strain 972 / ATCC 24843) (Fission yeast).